The following is a 937-amino-acid chain: Bifunctional glutamine synthetase adenylyltransferase/adenylyl-removing enzyme (937 aa).

Residues 1-436 (MSQPIPSASP…AAEFAELLAP (436 aa)) form an adenylyl removase region. The interval 443 to 937 (PDTLADYWRA…QLRFQPGKGA (495 aa)) is adenylyl transferase.

This sequence belongs to the GlnE family. Mg(2+) serves as cofactor.

It catalyses the reaction [glutamine synthetase]-O(4)-(5'-adenylyl)-L-tyrosine + phosphate = [glutamine synthetase]-L-tyrosine + ADP. The enzyme catalyses [glutamine synthetase]-L-tyrosine + ATP = [glutamine synthetase]-O(4)-(5'-adenylyl)-L-tyrosine + diphosphate. In terms of biological role, involved in the regulation of glutamine synthetase GlnA, a key enzyme in the process to assimilate ammonia. When cellular nitrogen levels are high, the C-terminal adenylyl transferase (AT) inactivates GlnA by covalent transfer of an adenylyl group from ATP to specific tyrosine residue of GlnA, thus reducing its activity. Conversely, when nitrogen levels are low, the N-terminal adenylyl removase (AR) activates GlnA by removing the adenylyl group by phosphorolysis, increasing its activity. The regulatory region of GlnE binds the signal transduction protein PII (GlnB) which indicates the nitrogen status of the cell. This Xanthomonas campestris pv. campestris (strain B100) protein is Bifunctional glutamine synthetase adenylyltransferase/adenylyl-removing enzyme.